We begin with the raw amino-acid sequence, 1360 residues long: KN motif and ankyrin repeat domains 1 (1360 aa).

Residues 30-68 (PYFVETPYGFQLDLDFVKYVDDIQKGNTIKKLNIQKRRK) form a KN motif; Interaction with TLN1 region. The Important for binding to TLN1 signature appears at 41–44 (LDLD). Residues 43–52 (LDFVKYVDDI) carry the Nuclear export signal 1 (NES 1) motif. Residues 65-68 (KRRK) carry the Nuclear localization signal 1 (NLS 1) motif. The interval 66–103 (RRKPSVPCPEVRAIPGHQGVWTSTESLSSSNSDDSKQC) is disordered. Positions 88 to 103 (STESLSSSNSDDSKQC) are enriched in low complexity. A Nuclear export signal 2 (NES 2) motif is present at residues 125-134 (LETSPTFAVS). S186 bears the Phosphoserine mark. The segment at 221 to 253 (DYNSYVPAAPTTSSMGSSVRHSPLSSGISTPVT) is disordered. A compositionally biased stretch (polar residues) spans 230-253 (PTTSSMGSSVRHSPLSSGISTPVT). Residues 244-339 (LSSGISTPVT…SQLELLARAR (96 aa)) form an interaction with PPFIBP1 region. The stretch at 260 to 311 (LQHIREQMAIALKRLKELEEQVRTIPVLQVKISVLQEEKRQLASQLKSQRAS) forms a coiled coil. A Phosphoserine modification is found at S325. Coiled coils occupy residues 367–394 (FRQL…ELRE) and 453–487 (ITEA…TTHD). The Nuclear export signal 3 (NES 3) signature appears at 618–627 (LTLLKTNLNL). Disordered regions lie at residues 929–954 (SQPE…MQGS) and 983–1053 (IMKK…DTRG). Basic and acidic residues-rich tracts occupy residues 938–947 (AEGKHSRGHE) and 985–995 (KKSDGNKDSNG). Residues 985–998 (KKSDGNKDSNGAKK) carry the Nuclear localization signal 2 (NLS 2) motif. The segment covering 1010–1025 (ETTSSDESSSDGSSSS) has biased composition (low complexity). A compositionally biased stretch (acidic residues) spans 1026–1047 (ESDDECDTIGYPPEEEEEEEEK). The tract at residues 1081–1360 (EPEKEEIRER…PGPTHRGSFD (280 aa)) is interaction with KIF21A. An ANK 0; degenerate repeat occupies 1117–1154 (KDMRICLNTLQHDWFRVSSQKSAVPAMVGDYIAAFEAV). ANK repeat units follow at residues 1169–1199 (NGNT…NVDH), 1203–1236 (AGYT…DVNA), 1241–1270 (AGQT…DVNI), 1274–1306 (EGST…HLED), and 1308–1337 (DGST…FSKA). The disordered stretch occupies residues 1337–1360 (AQSPSTPRLGRKTSPGPTHRGSFD).

Part of a cortical microtubule stabilization complex (CMSC) composed of KANK1, PPFIA1, PPFIBP1, ERC1/ELKS, PHLDB2/LL5beta, CLASPs, KIF21A and possibly additional interactors; within CMSCs KANK1 and PHLDB2/LL5beta appear to be the core components for targeting of microtubule-binding proteins KIF21A and CLASPs, whereas PPFIA1, PPFIBP1 and ERC1/ELKS serve as scaffolds for protein clustering. Interacts (via KN motif) with TLN1 (via R7 domain); this mediates CMSC clustering around focal adhesions. Interacts (via CC1 domain, residues 244-339) with PPFIBP1. Interacts (via ANK repeats 1-5) with KIF21A (via residues 1142-1169). Interacts with YWHAQ; the interaction requires KANK1 phosphorylation at Ser-325 and is enhanced by growth factor stimulation. Interacts with YWHAB, YWHAG, YWHAE, YWHAH, YWHAZ and SFN; the interaction requires KANK1 phosphorylation at Ser-325. Interacts with ARFGEF1; however, colocalization cannot be experimentally confirmed. Interacts with BAIAP2. Interacts with CTNNB1. Interacts (via coiled coil domain) with DAAM1 (via coiled coil domain).

The protein localises to the cytoplasm. It is found in the cell cortex. Its subcellular location is the cell projection. The protein resides in the ruffle membrane. It localises to the nucleus. Functionally, adapter protein that links structural and signaling protein complexes positioned to guide microtubule and actin cytoskeleton dynamics during cell morphogenesis. At focal adhesions (FAs) rims, organizes cortical microtubule stabilizing complexes (CMSCs) and directly interacts with major FA component TLN1, forming macromolecular assemblies positioned to control microtubule-actin crosstalk at the cell edge. Recruits KIF21A in CMSCs at axonal growth cones and regulates axon guidance by suppressing microtubule growth without inducing microtubule disassembly once it reaches the cell cortex. Interacts with ARFGEF1 and participates in establishing microtubule-organizing center (MTOC) orientation and directed cell movement in wound healing. Regulates actin stress fiber formation and cell migration by inhibiting RHOA activation in response to growth factors; this function involves phosphorylation through PI3K/Akt signaling and may depend on the competitive interaction with 14-3-3 adapter proteins to sequester them from active complexes. Inhibits the formation of lamellipodia but not of filopodia; this function may depend on the competitive interaction with BAIAP2 to block its association with activated RAC1. Inhibits fibronectin-mediated cell spreading; this function is partially mediated by BAIAP2. In the nucleus, is involved in beta-catenin-dependent activation of transcription. During cell division, may regulate DAAM1-dependent RHOA activation that signals centrosome maturation and chromosomal segregation. May also be involved in contractile ring formation during cytokinesis. Potential tumor suppressor for renal cell carcinoma. The sequence is that of KN motif and ankyrin repeat domains 1 from Mus musculus (Mouse).